The primary structure comprises 88 residues: Small ribosomal subunit protein uS15 (88 aa).

It belongs to the universal ribosomal protein uS15 family. Part of the 30S ribosomal subunit. Forms a bridge to the 50S subunit in the 70S ribosome, contacting the 23S rRNA.

One of the primary rRNA binding proteins, it binds directly to 16S rRNA where it helps nucleate assembly of the platform of the 30S subunit by binding and bridging several RNA helices of the 16S rRNA. Functionally, forms an intersubunit bridge (bridge B4) with the 23S rRNA of the 50S subunit in the ribosome. This Caldicellulosiruptor saccharolyticus (strain ATCC 43494 / DSM 8903 / Tp8T 6331) protein is Small ribosomal subunit protein uS15.